A 377-amino-acid polypeptide reads, in one-letter code: Succinyl-diaminopimelate desuccinylase (377 aa).

Zn(2+) is bound at residue histidine 68. Residue aspartate 70 is part of the active site. A Zn(2+)-binding site is contributed by aspartate 101. Glutamate 135 (proton acceptor) is an active-site residue. Zn(2+) contacts are provided by glutamate 136, glutamate 164, and histidine 350.

This sequence belongs to the peptidase M20A family. DapE subfamily. As to quaternary structure, homodimer. Zn(2+) is required as a cofactor. Requires Co(2+) as cofactor.

It catalyses the reaction N-succinyl-(2S,6S)-2,6-diaminopimelate + H2O = (2S,6S)-2,6-diaminopimelate + succinate. Its pathway is amino-acid biosynthesis; L-lysine biosynthesis via DAP pathway; LL-2,6-diaminopimelate from (S)-tetrahydrodipicolinate (succinylase route): step 3/3. In terms of biological role, catalyzes the hydrolysis of N-succinyl-L,L-diaminopimelic acid (SDAP), forming succinate and LL-2,6-diaminopimelate (DAP), an intermediate involved in the bacterial biosynthesis of lysine and meso-diaminopimelic acid, an essential component of bacterial cell walls. The polypeptide is Succinyl-diaminopimelate desuccinylase (Vibrio cholerae serotype O1 (strain ATCC 39541 / Classical Ogawa 395 / O395)).